Consider the following 75-residue polypeptide: Exodeoxyribonuclease 7 small subunit (75 aa).

This sequence belongs to the XseB family. As to quaternary structure, heterooligomer composed of large and small subunits.

The protein localises to the cytoplasm. The enzyme catalyses Exonucleolytic cleavage in either 5'- to 3'- or 3'- to 5'-direction to yield nucleoside 5'-phosphates.. In terms of biological role, bidirectionally degrades single-stranded DNA into large acid-insoluble oligonucleotides, which are then degraded further into small acid-soluble oligonucleotides. This chain is Exodeoxyribonuclease 7 small subunit, found in Thermotoga maritima (strain ATCC 43589 / DSM 3109 / JCM 10099 / NBRC 100826 / MSB8).